We begin with the raw amino-acid sequence, 308 residues long: Pantothenate synthetase (308 aa).

Met-39–His-46 provides a ligand contact to ATP. The Proton donor role is filled by His-46. Gln-71 serves as a coordination point for (R)-pantoate. Gln-71 contacts beta-alanine. An ATP-binding site is contributed by Gly-157–Asp-160. Gln-163 is a (R)-pantoate binding site. ATP is bound by residues Val-186 and Met-194 to Arg-197. Residues Ile-286–Asn-308 are disordered.

The protein belongs to the pantothenate synthetase family. In terms of assembly, homodimer.

It localises to the cytoplasm. It catalyses the reaction (R)-pantoate + beta-alanine + ATP = (R)-pantothenate + AMP + diphosphate + H(+). Its pathway is cofactor biosynthesis; (R)-pantothenate biosynthesis; (R)-pantothenate from (R)-pantoate and beta-alanine: step 1/1. In terms of biological role, catalyzes the condensation of pantoate with beta-alanine in an ATP-dependent reaction via a pantoyl-adenylate intermediate. The chain is Pantothenate synthetase from Mycobacterium avium (strain 104).